The following is a 426-amino-acid chain: 26S proteasome regulatory subunit 7 homolog A (426 aa).

Residue Gly-209–Thr-216 participates in ATP binding. Glycyl lysine isopeptide (Lys-Gly) (interchain with G-Cter in ubiquitin) cross-links involve residues Lys-400 and Lys-415.

It belongs to the AAA ATPase family. As to quaternary structure, component of the 19S regulatory particle (RP/PA700) base subcomplex of the 26S proteasome. The 26S proteasome is composed of a core protease (CP), known as the 20S proteasome, capped at one or both ends by the 19S regulatory particle (RP/PA700). The RP/PA700 complex is composed of at least 17 different subunits in two subcomplexes, the base and the lid, which form the portions proximal and distal to the 20S proteolytic core, respectively.

The protein localises to the cytoplasm. It is found in the nucleus. Its function is as follows. The 26S proteasome is involved in the ATP-dependent degradation of ubiquitinated proteins. The regulatory (or ATPase) complex confers ATP dependency and substrate specificity to the 26S complex. The polypeptide is 26S proteasome regulatory subunit 7 homolog A (RPT1A) (Arabidopsis thaliana (Mouse-ear cress)).